The primary structure comprises 1228 residues: Clustered mitochondria protein homolog (1228 aa).

Residues P298 to A557 enclose the Clu domain. One copy of the TPR 1 repeat lies at C486 to E519. Residues L671–E702 adopt a coiled-coil conformation. TPR repeat units follow at residues A982 to V1015 and A1108 to E1141.

It belongs to the CLU family. In terms of assembly, may associate with the eukaryotic translation initiation factor 3 (eIF-3) complex.

The protein localises to the cytoplasm. MRNA-binding protein involved in proper cytoplasmic distribution of mitochondria. In Eremothecium gossypii (strain ATCC 10895 / CBS 109.51 / FGSC 9923 / NRRL Y-1056) (Yeast), this protein is Clustered mitochondria protein homolog.